Here is a 100-residue protein sequence, read N- to C-terminus: Putative protein BCL8 (100 aa).

As to expression, expressed in prostate and testis.

In Homo sapiens (Human), this protein is Putative protein BCL8 (NBEAP1).